A 192-amino-acid chain; its full sequence is Mitochondrial import inner membrane translocase subunit Tim22 (192 aa).

Intrachain disulfides connect C67–C139 and C158–C177. 3 consecutive transmembrane segments (helical) span residues 72-92 (VLAC…TAGI), 123-141 (YAKN…ECLV), and 168-188 (AGVK…AAID).

This sequence belongs to the Tim17/Tim22/Tim23 family. As to quaternary structure, component of the TIM22 complex, whose core is composed of TIMM22, associated with peripheral protein FXC1/TIMM10B and the 70 kDa heterohexamer. In most cases, the 70 kDa complex is composed of TIMM9 and TIMM10 (TIMM10A or TIMM10B). A small fraction of the 70 kDa complex is composed of TIMM8 (TIMM8A/DDP1 or TIMM8B/DDP2) and TIMM13. The TIM22 complex also contains AGK and TIMM29. Interacts directly with TIMM9, TIMM10A and FXC1/TIMM10B. Interacts (when oxidized) with TIMM29; interaction is direct. In terms of processing, disulfide bonds promote efficient assembly of the TIM22 complex.

It localises to the mitochondrion inner membrane. Functionally, essential core component of the TIM22 complex, a complex that mediates the import and insertion of multi-pass transmembrane proteins into the mitochondrial inner membrane. In the TIM22 complex, it constitutes the voltage-activated and signal-gated channel. Forms a twin-pore translocase that uses the membrane potential as external driving force in 2 voltage-dependent steps. The polypeptide is Mitochondrial import inner membrane translocase subunit Tim22 (Timm22) (Rattus norvegicus (Rat)).